The chain runs to 116 residues: Cell division protein FtsL (116 aa).

The Cytoplasmic segment spans residues 1–24; sequence MMLTNRQIRVRLFESLKNSFFKKT. Residues 25-45 form a helical membrane-spanning segment; the sequence is VGISFALLFILLITAFSLIVV. Over 46 to 116 the chain is Periplasmic; that stretch reads RFEYKLQLNE…NEQKEELNNE (71 aa).

This sequence belongs to the FtsL family. As to quaternary structure, part of a complex composed of FtsB, FtsL and FtsQ.

It localises to the cell inner membrane. Functionally, essential cell division protein. May link together the upstream cell division proteins, which are predominantly cytoplasmic, with the downstream cell division proteins, which are predominantly periplasmic. The chain is Cell division protein FtsL from Francisella tularensis subsp. tularensis (strain SCHU S4 / Schu 4).